The primary structure comprises 394 residues: Cell adhesion molecule 3 (394 aa).

The N-terminal stretch at Met1–Ala17 is a signal peptide. Residues Ala18 to His326 lie on the Extracellular side of the membrane. An Ig-like V-type domain is found at Pro22–Thr120. Cystine bridges form between Cys45/Cys105 and Cys147/Cys204. Ig-like C2-type domains are found at residues Pro128–Gln223 and Pro228–Thr306. The segment at Ser217 to Arg240 is disordered. Positions Ala230–Arg240 are enriched in basic and acidic residues. A disulfide bond links Cys249 and Cys295. The chain crosses the membrane as a helical span at residues Ala327–Leu347. At Gly348–Ile394 the chain is on the cytoplasmic side. A disordered region spans residues Ala363–Ile394.

It belongs to the nectin family.

It localises to the cell membrane. Its subcellular location is the cell junction. Its function is as follows. May be involved in cell-cell adhesion. The protein is Cell adhesion molecule 3 (cadm3) of Xenopus laevis (African clawed frog).